We begin with the raw amino-acid sequence, 109 residues long: Small ribosomal subunit protein bS20 (109 aa).

The protein belongs to the bacterial ribosomal protein bS20 family.

In terms of biological role, binds directly to 16S ribosomal RNA. This chain is Small ribosomal subunit protein bS20, found in Synechococcus sp. (strain JA-2-3B'a(2-13)) (Cyanobacteria bacterium Yellowstone B-Prime).